The chain runs to 95 residues: Large ribosomal subunit protein bL25 (95 aa).

The protein belongs to the bacterial ribosomal protein bL25 family. Part of the 50S ribosomal subunit; part of the 5S rRNA/L5/L18/L25 subcomplex. Contacts the 5S rRNA. Binds to the 5S rRNA independently of L5 and L18.

In terms of biological role, this is one of the proteins that binds to the 5S RNA in the ribosome where it forms part of the central protuberance. The sequence is that of Large ribosomal subunit protein bL25 from Shewanella halifaxensis (strain HAW-EB4).